The sequence spans 411 residues: Diels-Alderase ffsF (411 aa).

The N-terminal stretch at 1-17 (MTQIKLLLLSLAITAQS) is a signal peptide.

It belongs to the Diels-Alderase family.

Its pathway is mycotoxin biosynthesis. In terms of biological role, diels-Alderase; part of the gene cluster that mediates the biosynthesis of the cytotoxic leucine-containing cytochalasans, including aspochalasin C, aspochalasin E, TMC-169, flavichalasine F, aspergillin PZ, aspochalasin M and flavichalasine G. The first step in the pathway is catalyzed by the hybrid PKS-NRPS ffsA that utilizes 8 units of malonyl-CoA to iteratively assemble the octaketide chain before addition of L-leucine by the C-terminal NRPS modules. Because ffsA lacks a designated enoylreductase (ER) domain, the required activity is provided the enoyl reductase fssC. The methyltransferase (MT) domain of ffsA catalyzes the alpha-methylation at C10 and C14 using S-adenosyl-L-methionine as the methyl-donating cosubstrate. Reduction by the hydrolyase ffsE, followed by dehydration and intra-molecular Diels-Alder cyclization by the Diels-Alderase ffsF then yield the required isoindolone-fused macrocycle. A number of oxidative steps catalyzed by the tailoring cytochrome P450 monooxygenase ffsD, the FAD-linked oxidoreductase ffsJ and the short-chain dehydrogenase/reductase ffsI, are further required to afford the final products. The chain is Diels-Alderase ffsF from Aspergillus flavipes.